A 179-amino-acid chain; its full sequence is Bifunctional protein PyrR (179 aa).

Residues 97–109 (IILTDDVLYTGRT) carry the PRPP-binding motif.

This sequence belongs to the purine/pyrimidine phosphoribosyltransferase family. PyrR subfamily.

The catalysed reaction is UMP + diphosphate = 5-phospho-alpha-D-ribose 1-diphosphate + uracil. Regulates the transcription of the pyrimidine nucleotide (pyr) operon in response to exogenous pyrimidines. Its function is as follows. Also displays a weak uracil phosphoribosyltransferase activity which is not physiologically significant. The polypeptide is Bifunctional protein PyrR (Elusimicrobium minutum (strain Pei191)).